Here is a 188-residue protein sequence, read N- to C-terminus: CASP-like protein 1E1 (188 aa).

Topologically, residues 1–23 (MEGVESKEREVMVAKPVAVVGVC) are cytoplasmic. A helical membrane pass occupies residues 24-44 (DLLLRLLAFTVTLVAAIVIAV). Topologically, residues 45-78 (DKQTKLVPIQLSDSFPPLNVPLTAKWHQMSAFVY) are extracellular. The helical transmembrane segment at 79–99 (FLVTNAIACTYAAMSLLLALV) threads the bilayer. Topologically, residues 100 to 116 (NRGKSKGLWTLIAVLDT) are cytoplasmic. The helical transmembrane segment at 117–137 (FMVALLFSGNGAAAAVGILGY) threads the bilayer. The Extracellular segment spans residues 138-161 (KGNSHVNWNKVCNVFGKFCDQMAA). Residues 162-182 (SIGVSLIGSLAFLLLVVIPVV) form a helical membrane-spanning segment. Residues 183–188 (RLHRRT) are Cytoplasmic-facing.

Belongs to the Casparian strip membrane proteins (CASP) family. As to quaternary structure, homodimer and heterodimers.

The protein resides in the cell membrane. The protein is CASP-like protein 1E1 of Glycine max (Soybean).